The primary structure comprises 351 residues: SKP1-like protein 21 (351 aa).

Residues 108 to 167 are interaction with the F-box domain of F-box proteins; the sequence is TSAADSLQLKPLVDLTSRALARIIEGKTPEEIREIFHLPDDLTEEEKLEPLKNTMDDPRI. Disordered regions lie at residues 216–240 and 330–351; these read VKTS…NGTC and VNFS…AGHK. The segment covering 217–230 has biased composition (basic residues); sequence KTSKSKKKNKKRKE. The span at 330 to 342 shows a compositional bias: polar residues; it reads VNFSINGNGTSRR.

Belongs to the SKP1 family. In terms of assembly, part of a SCF (SKP1-cullin-F-box) protein ligase complex. As to expression, expressed in young seedlings, roots, leaves, floral stems, inflorescences, and siliques.

It is found in the nucleus. It functions in the pathway protein modification; protein ubiquitination. In terms of biological role, involved in ubiquitination and subsequent proteasomal degradation of target proteins. Together with CUL1, RBX1 and a F-box protein, it forms a SCF E3 ubiquitin ligase complex. The functional specificity of this complex depends on the type of F-box protein. In the SCF complex, it serves as an adapter that links the F-box protein to CUL1. The polypeptide is SKP1-like protein 21 (ASK21) (Arabidopsis thaliana (Mouse-ear cress)).